Reading from the N-terminus, the 352-residue chain is C-X-C chemokine receptor type 4 (352 aa).

The interval 1 to 21 (MEGISIYTSDNYTEEMGSGDY) is important for chemokine binding and signaling. At 1 to 38 (MEGISIYTSDNYTEEMGSGDYDSIKEPCFREENAHFNR) the chain is on the extracellular side. Sulfotyrosine is present on Tyr-7. Asn-11 carries an N-linked (GlcNAc...) asparagine glycan. Tyr-12 bears the Sulfotyrosine mark. Ser-18 is a glycosylation site (O-linked (Xyl...) (chondroitin sulfate) serine). Tyr-21 bears the Sulfotyrosine mark. 2 disulfide bridges follow: Cys-28–Cys-274 and Cys-109–Cys-186. A helical membrane pass occupies residues 39–63 (IFLPTIYSIIFLTGIVGNGLVILVM). The Cytoplasmic portion of the chain corresponds to 64–77 (GYQKKLRSMTDKYR). A helical transmembrane segment spans residues 78–99 (LHLSVADLLFVITLPFWAVDAV). Residues 94–97 (WAVD) are chemokine binding. Topologically, residues 100-110 (ANWYFGNFLCK) are extracellular. Residues 111–130 (AVHVIYTVNLYSSVLILAFI) traverse the membrane as a helical segment. The segment at 113–117 (HVIYT) is chemokine binding. Residues 131-154 (SLDRYLAIVHATNSQRPRKLLAEK) lie on the Cytoplasmic side of the membrane. Residues 133 to 135 (DRY) carry the Important for signaling motif. The involved in dimerization; when bound to chemokine stretch occupies residues 135–147 (YLAIVHATNSQRP). The helical transmembrane segment at 155 to 174 (VVYVGVWIPALLLTIPDFIF) threads the bilayer. The Extracellular portion of the chain corresponds to 175–195 (ASVSEADDRYICDRFYPNDLW). A chemokine binding, important for signaling region spans residues 186-190 (CDRFY). Residues 191 to 210 (PNDLWVVVFQFQHIMVGLIL) form an involved in dimerization region. A helical membrane pass occupies residues 196-216 (VVVFQFQHIMVGLILPGIVIL). Residues 217 to 241 (SCYCIIISKLSHSKGHQKRKALKTT) are Cytoplasmic-facing. The chain crosses the membrane as a helical span at residues 242–261 (VILILAFFACWLPYYIGISI). The Extracellular portion of the chain corresponds to 262-282 (DSFILLEIIKQGCEFENTVHK). The tract at residues 266 to 268 (LLE) is involved in dimerization. A helical transmembrane segment spans residues 283–302 (WISITEALAFFHCCLNPILY). Residues 303–352 (AFLGAKFKTSAQHALTSVSRGSSLKILSKGKRGGHSSVSTESESSSFHSS) are Cytoplasmic-facing. 2 positions are modified to phosphoserine: Ser-319 and Ser-321. A phosphoserine; by PKC and GRK6 mark is found at Ser-324 and Ser-325. The interval 329 to 352 (LSKGKRGGHSSVSTESESSSFHSS) is disordered. Ser-330 carries the phosphoserine; by GRK6 modification. Lys-331 is covalently cross-linked (Glycyl lysine isopeptide (Lys-Gly) (interchain with G-Cter in ubiquitin)). The segment covering 337 to 352 (HSSVSTESESSSFHSS) has biased composition (low complexity). Ser-339 is subject to Phosphoserine; by GRK6. Phosphoserine is present on residues Ser-348 and Ser-351.

Belongs to the G-protein coupled receptor 1 family. Monomer. Can form homodimers. Interacts with CD164. Interacts with ARRB2; the interaction is dependent on the C-terminal phosphorylation of CXCR4 and allows activation of MAPK1 and MAPK3. Interacts with ARR3; the interaction is dependent on the C-terminal phosphorylation of CXCR4 and modulates calcium mobilization. Interacts with RNF113A; the interaction, enhanced by CXCL12, promotes CXCR4 ubiquitination and subsequent degradation. Interacts (via the cytoplasmic C-terminal) with ITCH (via the WW domains I and II); the interaction, enhanced by CXCL12, promotes CXCR4 ubiquitination and leads to its degradation. Interacts with extracellular ubiquitin. Interacts with DBN1; this interaction is enhanced by antigenic stimulation. Following LPS binding, may form a complex with GDF5, HSP90AA1 and HSPA8. Phosphorylated on agonist stimulation. Rapidly phosphorylated on serine and threonine residues in the C-terminal. Phosphorylation at Ser-324 and Ser-325 leads to recruitment of ITCH, ubiquitination and protein degradation. Post-translationally, ubiquitinated after ligand binding, leading to its degradation. Ubiquitinated by ITCH at the cell membrane on agonist stimulation. The ubiquitin-dependent mechanism, endosomal sorting complex required for transport (ESCRT), then targets CXCR4 for lysosomal degradation. This process is dependent also on prior Ser-/Thr-phosphorylation in the C-terminal of CXCR4. Also binding of ARRB1 to STAM negatively regulates CXCR4 sorting to lysosomes though modulating ubiquitination of SFR5S. In terms of processing, sulfation is required for efficient binding of CXCL12/SDF-1alpha and promotes its dimerization. O- and N-glycosylated. N-glycosylation can mask coreceptor function. The O-glycosylation chondroitin sulfate attachment does not affect interaction with CXCL12/SDF-1alpha nor its coreceptor activity.

It localises to the cell membrane. The protein localises to the cell junction. Its subcellular location is the early endosome. The protein resides in the late endosome. It is found in the lysosome. Functionally, receptor for the C-X-C chemokine CXCL12/SDF-1 that transduces a signal by increasing intracellular calcium ion levels and enhancing MAPK1/MAPK3 activation. Involved in the AKT signaling cascade. Plays a role in regulation of cell migration, e.g. during wound healing. Acts as a receptor for extracellular ubiquitin; leading to enhanced intracellular calcium ions and reduced cellular cAMP levels. Binds bacterial lipopolysaccharide (LPS) et mediates LPS-induced inflammatory response, including TNF secretion by monocytes. Involved in hematopoiesis and in cardiac ventricular septum formation. Also plays an essential role in vascularization of the gastrointestinal tract, probably by regulating vascular branching and/or remodeling processes in endothelial cells. Involved in cerebellar development. In the CNS, could mediate hippocampal-neuron survival. The chain is C-X-C chemokine receptor type 4 (CXCR4) from Papio anubis (Olive baboon).